Reading from the N-terminus, the 220-residue chain is MEHPVFKRDPSEKSETERREVPPLLKLALELGPLLVFFFANARGEMLIERFPILGSIGAPIFLATALFMAATVIALAISWSMTRTLPIMPLVSGIVVLVFGALTLWLHNDTFIKMKPTIVNTLFGGILLGGLFFGKSLLGYVFDSAFRLDAEGWRKLTLRWALFFIFLAIVNEIVWRNFSTDTWVSFKVWGIMPITIVFTLLQMPLIQKHSLTDEENTAS.

The next 6 helical transmembrane spans lie at 20-40 (EVPP…FFFA), 57-77 (IGAP…IALA), 86-106 (LPIM…LTLW), 123-143 (LFGG…GYVF), 156-176 (KLTL…EIVW), and 187-207 (FKVW…MPLI).

This sequence belongs to the YciB family.

It is found in the cell inner membrane. Plays a role in cell envelope biogenesis, maintenance of cell envelope integrity and membrane homeostasis. This chain is Inner membrane-spanning protein YciB, found in Brucella melitensis biotype 2 (strain ATCC 23457).